The following is a 460-amino-acid chain: Proton extrusion protein PxcA (460 aa).

Disordered regions lie at residues 82 to 128 and 143 to 190; these read FSRL…QRRD and SRYK…GSGN. A compositionally biased stretch (polar residues) spans 90 to 102; the sequence is QNGSGPTSAQDKA. The span at 107–120 shows a compositional bias: low complexity; the sequence is AAEANVSESSSENS. Positions 151 to 163 are enriched in polar residues; the sequence is KSQPISASISTSP. Positions 171 to 184 are enriched in low complexity; that stretch reads QPTSTQPSSSNVSV. The next 4 helical transmembrane spans lie at 242-262, 337-357, 373-393, and 420-440; these read FLLLLAILPLLTQILSKNFLF, GLKNILADLLSLLVFGWLIFV, IYGLSDSAKAFIIILFTDVFV, and FIYGFIATFPVFLDTLFKYWI.

This sequence belongs to the CemA family.

It localises to the cell inner membrane. Functionally, required for H(+) efflux immediately after light irradiation to form a rapid H(+) concentration gradient across the thylakoid membranes. Together with PxcL, contributes to transient H(+) uptake following dark to light transition. The polypeptide is Proton extrusion protein PxcA (Synechococcus sp. (strain JA-2-3B'a(2-13)) (Cyanobacteria bacterium Yellowstone B-Prime)).